Reading from the N-terminus, the 145-residue chain is Inner membrane protein YiaA (145 aa).

At 1–12 (MDNKISTYSPAF) the chain is on the cytoplasmic side. Residues 13–32 (SIVSWIALVGGIVTYLLGLW) traverse the membrane as a helical segment. Residues 33–41 (NAEMQLNEK) are Periplasmic-facing. A helical transmembrane segment spans residues 42 to 59 (GYYFAVLVLGLFSAASYQ). The Cytoplasmic segment spans residues 60–71 (KTVRDKYEGIPT). Residues 72–94 (TSIYYMTCLTVFIISVALLMVGL) form a helical membrane-spanning segment. The Periplasmic portion of the chain corresponds to 95–98 (WNAT). The chain crosses the membrane as a helical span at residues 99–121 (LLLSEKGFYGLAFFLSLFGAVAV). Over 122–145 (QKNIRDAGINPPKETQVTQEEYSE) the chain is Cytoplasmic.

The protein resides in the cell inner membrane. This is Inner membrane protein YiaA (yiaA) from Escherichia coli (strain K12).